The following is a 419-amino-acid chain: Gamma-glutamyl phosphate reductase (419 aa).

It belongs to the gamma-glutamyl phosphate reductase family.

It is found in the cytoplasm. It carries out the reaction L-glutamate 5-semialdehyde + phosphate + NADP(+) = L-glutamyl 5-phosphate + NADPH + H(+). The protein operates within amino-acid biosynthesis; L-proline biosynthesis; L-glutamate 5-semialdehyde from L-glutamate: step 2/2. Its function is as follows. Catalyzes the NADPH-dependent reduction of L-glutamate 5-phosphate into L-glutamate 5-semialdehyde and phosphate. The product spontaneously undergoes cyclization to form 1-pyrroline-5-carboxylate. The chain is Gamma-glutamyl phosphate reductase from Mannheimia succiniciproducens (strain KCTC 0769BP / MBEL55E).